Consider the following 839-residue polypeptide: ATP-binding cassette sub-family F member 1 (839 aa).

The interval 1-258 (MPKGPKQQPP…KKEKKKLKKQ (258 aa)) is disordered. Phosphoserine is present on S22. The span at 29 to 39 (KKGKKDKKTKK) shows a compositional bias: basic residues. Residues 47-64 (VEDKQAGEEEKLQKEKEQ) show a composition bias toward basic and acidic residues. Positions 71–83 (QKKKRDTRKGRRK) are enriched in basic residues. Residues S105, S109, and S140 each carry the phosphoserine modification. The segment covering 136 to 149 (IQDESEEEKEEEEE) has biased composition (acidic residues). Positions 150–162 (KPVLKPAKPEKNR) are enriched in basic and acidic residues. At T195 the chain carries Phosphothreonine. S197 carries the phosphoserine modification. Residues 206 to 223 (TKEKEPPRPGKDKDKKGA) are compositionally biased toward basic and acidic residues. Phosphoserine is present on S227. The span at 247–256 (LSKKEKKKLK) shows a compositional bias: basic residues. The region spanning 298–542 (IKLEKFSISA…MYQQKQKELL (245 aa)) is the ABC transporter 1 domain. 330–337 (GPNGKGKT) is an ATP binding site. A compositionally biased stretch (basic and acidic residues) spans 553-574 (KELKAGGKSTKQAEKQTKEVLT). A disordered region spans residues 553–600 (KELKAGGKSTKQAEKQTKEVLTRKQQKCRRKNQDEESQDPPELLKRPR). S589 is subject to Phosphoserine. Residues 619-834 (LGLHGVTFGY…VLEALGEVMV (216 aa)) form the ABC transporter 2 domain. Residue 652–659 (GPNGVGKS) participates in ATP binding.

In terms of assembly, interacts (via N-terminus) with EIF2S1; the interaction is independent of its phosphorylated status. Associates (via both ABC transporter domains) with the ribosomes. Phosphorylated at phosphoserine and phosphothreonine. Phosphorylation on Ser-109 and Ser-140 by CK2; inhibits association of EIF2 with ribosomes.

The protein localises to the cytoplasm. Its subcellular location is the nucleus. It localises to the nucleoplasm. The protein resides in the nucleus envelope. Its function is as follows. Required for efficient Cap- and IRES-mediated mRNA translation initiation. Not involved in the ribosome biogenesis. The protein is ATP-binding cassette sub-family F member 1 (Abcf1) of Rattus norvegicus (Rat).